A 434-amino-acid chain; its full sequence is Tryptamine hydroxycinnamoyltransferase 2 (434 aa).

Residues His-154 and Asp-380 each act as proton acceptor in the active site.

It belongs to the plant acyltransferase family.

Functionally, hydroxycinnamoyl transferase that catalyzes the transfer of an acyl from p-coumaryol-CoA to tryptamine, to produce coumaroyl tryptamine. Serotonin and tyramine serve as acyl acceptors in vitro. Can use caffeoyl-CoA, and to a lesser extent feruloyl-CoA, as acyl donors. This is Tryptamine hydroxycinnamoyltransferase 2 from Oryza sativa subsp. japonica (Rice).